The chain runs to 938 residues: Isoleucine--tRNA ligase (938 aa).

Positions 58–68 match the 'HIGH' region motif; sequence PYANGSIHIGH. Glu-561 serves as a coordination point for L-isoleucyl-5'-AMP. The short motif at 602-606 is the 'KMSKS' region element; it reads KMSKS. Lys-605 contacts ATP. Residues Cys-901, Cys-904, Cys-921, and Cys-924 each coordinate Zn(2+).

The protein belongs to the class-I aminoacyl-tRNA synthetase family. IleS type 1 subfamily. Monomer. Zn(2+) serves as cofactor.

It localises to the cytoplasm. The catalysed reaction is tRNA(Ile) + L-isoleucine + ATP = L-isoleucyl-tRNA(Ile) + AMP + diphosphate. Functionally, catalyzes the attachment of isoleucine to tRNA(Ile). As IleRS can inadvertently accommodate and process structurally similar amino acids such as valine, to avoid such errors it has two additional distinct tRNA(Ile)-dependent editing activities. One activity is designated as 'pretransfer' editing and involves the hydrolysis of activated Val-AMP. The other activity is designated 'posttransfer' editing and involves deacylation of mischarged Val-tRNA(Ile). The protein is Isoleucine--tRNA ligase of Citrobacter koseri (strain ATCC BAA-895 / CDC 4225-83 / SGSC4696).